The following is a 236-amino-acid chain: 2-C-methyl-D-erythritol 4-phosphate cytidylyltransferase (236 aa).

It belongs to the IspD/TarI cytidylyltransferase family. IspD subfamily. Homodimer.

The catalysed reaction is 2-C-methyl-D-erythritol 4-phosphate + CTP + H(+) = 4-CDP-2-C-methyl-D-erythritol + diphosphate. Its pathway is isoprenoid biosynthesis; isopentenyl diphosphate biosynthesis via DXP pathway; isopentenyl diphosphate from 1-deoxy-D-xylulose 5-phosphate: step 2/6. Functionally, catalyzes the formation of 4-diphosphocytidyl-2-C-methyl-D-erythritol from CTP and 2-C-methyl-D-erythritol 4-phosphate (MEP). This Escherichia coli O127:H6 (strain E2348/69 / EPEC) protein is 2-C-methyl-D-erythritol 4-phosphate cytidylyltransferase.